We begin with the raw amino-acid sequence, 146 residues long: Ribosome-binding factor A (146 aa).

The segment at 121–146 (KQQQFGSADDVTENDIDEADDTEGKA) is disordered. Residues 130–146 (DVTENDIDEADDTEGKA) are compositionally biased toward acidic residues.

This sequence belongs to the RbfA family. Monomer. Binds 30S ribosomal subunits, but not 50S ribosomal subunits or 70S ribosomes.

It localises to the cytoplasm. In terms of biological role, one of several proteins that assist in the late maturation steps of the functional core of the 30S ribosomal subunit. Associates with free 30S ribosomal subunits (but not with 30S subunits that are part of 70S ribosomes or polysomes). Required for efficient processing of 16S rRNA. May interact with the 5'-terminal helix region of 16S rRNA. This chain is Ribosome-binding factor A, found in Shewanella sp. (strain MR-4).